We begin with the raw amino-acid sequence, 134 residues long: Putative nickel-responsive regulator (134 aa).

H78, H89, H91, and C97 together coordinate Ni(2+).

Belongs to the transcriptional regulatory CopG/NikR family. It depends on Ni(2+) as a cofactor.

Transcriptional regulator. The sequence is that of Putative nickel-responsive regulator from Chlorobium phaeobacteroides (strain DSM 266 / SMG 266 / 2430).